The sequence spans 208 residues: Uracil phosphoribosyltransferase (208 aa).

5-phospho-alpha-D-ribose 1-diphosphate is bound by residues Arg78, Arg103, and Asp130 to Ser138. Uracil-binding positions include Ile193 and Gly198 to Ala200. Residue Asp199 coordinates 5-phospho-alpha-D-ribose 1-diphosphate.

It belongs to the UPRTase family. Requires Mg(2+) as cofactor.

The enzyme catalyses UMP + diphosphate = 5-phospho-alpha-D-ribose 1-diphosphate + uracil. It participates in pyrimidine metabolism; UMP biosynthesis via salvage pathway; UMP from uracil: step 1/1. Its activity is regulated as follows. Allosterically activated by GTP. Functionally, catalyzes the conversion of uracil and 5-phospho-alpha-D-ribose 1-diphosphate (PRPP) to UMP and diphosphate. The protein is Uracil phosphoribosyltransferase of Klebsiella pneumoniae (strain 342).